The primary structure comprises 820 residues: Serine/threonine-protein phosphatase 4 regulatory subunit 3 (820 aa).

Residues 1–100 (MSDTRRRVKV…DEIWEKICQV (100 aa)) enclose the WH1 domain. Disordered regions lie at residues 687–711 (EDEE…DFPE) and 750–820 (AANG…RLGS). A compositionally biased stretch (basic and acidic residues) spans 701 to 711 (EKTKTEDDFPE). The span at 750 to 761 (AANGANSTNSKS) shows a compositional bias: polar residues. The span at 770-784 (SSNGSSSKNTSLTTT) shows a compositional bias: low complexity. The segment covering 798 to 809 (YPDDEDEEEEED) has biased composition (acidic residues).

Belongs to the SMEK family. As to quaternary structure, serine/threonine-protein phosphatase 4 (PP4) occurs in different assemblies of the catalytic and one or more regulatory subunits.

In terms of biological role, regulatory subunit of serine/threonine-protein phosphatase 4 (PP4). In Xenopus tropicalis (Western clawed frog), this protein is Serine/threonine-protein phosphatase 4 regulatory subunit 3.